Here is a 156-residue protein sequence, read N- to C-terminus: Endoribonuclease YbeY (156 aa).

Zn(2+) contacts are provided by His122, His126, and His132.

Belongs to the endoribonuclease YbeY family. Zn(2+) is required as a cofactor.

It localises to the cytoplasm. Functionally, single strand-specific metallo-endoribonuclease involved in late-stage 70S ribosome quality control and in maturation of the 3' terminus of the 16S rRNA. This chain is Endoribonuclease YbeY, found in Bacillus cereus (strain ATCC 14579 / DSM 31 / CCUG 7414 / JCM 2152 / NBRC 15305 / NCIMB 9373 / NCTC 2599 / NRRL B-3711).